A 158-amino-acid polypeptide reads, in one-letter code: Crossover junction endodeoxyribonuclease RuvC (158 aa).

Active-site residues include aspartate 7, glutamate 67, and aspartate 140. The Mg(2+) site is built by aspartate 7, glutamate 67, and aspartate 140.

It belongs to the RuvC family. As to quaternary structure, homodimer which binds Holliday junction (HJ) DNA. The HJ becomes 2-fold symmetrical on binding to RuvC with unstacked arms; it has a different conformation from HJ DNA in complex with RuvA. In the full resolvosome a probable DNA-RuvA(4)-RuvB(12)-RuvC(2) complex forms which resolves the HJ. Mg(2+) serves as cofactor.

Its subcellular location is the cytoplasm. It carries out the reaction Endonucleolytic cleavage at a junction such as a reciprocal single-stranded crossover between two homologous DNA duplexes (Holliday junction).. In terms of biological role, the RuvA-RuvB-RuvC complex processes Holliday junction (HJ) DNA during genetic recombination and DNA repair. Endonuclease that resolves HJ intermediates. Cleaves cruciform DNA by making single-stranded nicks across the HJ at symmetrical positions within the homologous arms, yielding a 5'-phosphate and a 3'-hydroxyl group; requires a central core of homology in the junction. The consensus cleavage sequence is 5'-(A/T)TT(C/G)-3'. Cleavage occurs on the 3'-side of the TT dinucleotide at the point of strand exchange. HJ branch migration catalyzed by RuvA-RuvB allows RuvC to scan DNA until it finds its consensus sequence, where it cleaves and resolves the cruciform DNA. This is Crossover junction endodeoxyribonuclease RuvC from Dictyoglomus turgidum (strain DSM 6724 / Z-1310).